A 482-amino-acid polypeptide reads, in one-letter code: Ribosomal protein uS12 methylthiotransferase RimO (482 aa).

Residues 2 to 115 (MKVHIITLGC…IAEVVETFQP (114 aa)) form the MTTase N-terminal domain. The [4Fe-4S] cluster site is built by cysteine 11, cysteine 47, cysteine 79, cysteine 177, cysteine 181, and cysteine 184. In terms of domain architecture, Radical SAM core spans 163–394 (RAVGPSAYLK…MRLQQRISRE (232 aa)). The 70-residue stretch at 397–466 (RRWLGRVVRV…DYDLWGDVVG (70 aa)) folds into the TRAM domain.

It belongs to the methylthiotransferase family. RimO subfamily. [4Fe-4S] cluster serves as cofactor.

The protein resides in the cytoplasm. The enzyme catalyses L-aspartate(89)-[ribosomal protein uS12]-hydrogen + (sulfur carrier)-SH + AH2 + 2 S-adenosyl-L-methionine = 3-methylsulfanyl-L-aspartate(89)-[ribosomal protein uS12]-hydrogen + (sulfur carrier)-H + 5'-deoxyadenosine + L-methionine + A + S-adenosyl-L-homocysteine + 2 H(+). Its function is as follows. Catalyzes the methylthiolation of an aspartic acid residue of ribosomal protein uS12. This Roseiflexus castenholzii (strain DSM 13941 / HLO8) protein is Ribosomal protein uS12 methylthiotransferase RimO.